Reading from the N-terminus, the 322-residue chain is tRNA N6-adenosine threonylcarbamoyltransferase (322 aa).

The Fe cation site is built by His-109 and His-113. Residues 131–135, Asp-164, Gly-177, Asp-181, and Asn-277 each bind substrate; that span reads LISGG. A Fe cation-binding site is contributed by Asp-303.

This sequence belongs to the KAE1 / TsaD family. The cofactor is Fe(2+).

It localises to the cytoplasm. The enzyme catalyses L-threonylcarbamoyladenylate + adenosine(37) in tRNA = N(6)-L-threonylcarbamoyladenosine(37) in tRNA + AMP + H(+). Required for the formation of a threonylcarbamoyl group on adenosine at position 37 (t(6)A37) in tRNAs that read codons beginning with adenine. Is involved in the transfer of the threonylcarbamoyl moiety of threonylcarbamoyl-AMP (TC-AMP) to the N6 group of A37, together with TsaE and TsaB. TsaD likely plays a direct catalytic role in this reaction. In Mesomycoplasma hyopneumoniae (strain 232) (Mycoplasma hyopneumoniae), this protein is tRNA N6-adenosine threonylcarbamoyltransferase.